The primary structure comprises 126 residues: MAILGLGTDIVEIARIEAVIARSGERLARRVLSDNEWEIWKTHHQPVRFLAKRFAVKEAAAKAFGTGIRNGLAFNQFEVFNDELGKPRLRLWGEALKLAEKLGVANMHVTLADERHYACATVIIES.

Mg(2+) contacts are provided by Asp9 and Glu58.

The protein belongs to the P-Pant transferase superfamily. AcpS family. In terms of assembly, homodimer. Mg(2+) is required as a cofactor.

Its subcellular location is the cytoplasm. It carries out the reaction apo-[ACP] + CoA = holo-[ACP] + adenosine 3',5'-bisphosphate + H(+). Functionally, transfers the 4'-phosphopantetheine moiety from coenzyme A to the 'Ser-36' of acyl-carrier-protein. This Escherichia coli O157:H7 protein is Holo-[acyl-carrier-protein] synthase.